A 527-amino-acid chain; its full sequence is RUS family member 1 (527 aa).

Asparagine 21 is a glycosylation site (N-linked (GlcNAc...) asparagine). Residues 220-240 (SQETAVNLVGMLLSVIVSSFI) traverse the membrane as a helical segment. The N-linked (GlcNAc...) asparagine glycan is linked to asparagine 243. The helical transmembrane segment at 245 to 265 (SLIVTWLVFLFFTSLHLFCNY) threads the bilayer. The N-linked (GlcNAc...) asparagine glycan is linked to asparagine 346. A disordered region spans residues 350 to 426 (TKNVNNNNNN…NNNNNNNNNK (77 aa)). Residues asparagine 467 and asparagine 497 are each glycosylated (N-linked (GlcNAc...) asparagine).

This sequence belongs to the RUS1 family.

The protein resides in the membrane. This chain is RUS family member 1 (rusf1), found in Dictyostelium discoideum (Social amoeba).